We begin with the raw amino-acid sequence, 1464 residues long: ABC transporter G family member 35 (1464 aa).

A disordered region spans residues 1-26 (MDAAAEMQKVVSLRRGGGGSSSRGAA). The ABC transporter 1 domain occupies 173–446 (ANALGILPNK…FELMGFKCPE (274 aa)). An ATP-binding site is contributed by 206 to 213 (GPPGSGKT). Residues 524-737 (ELLKANIDRE…AQNAISVNEF (214 aa)) form the ABC transmembrane type-2 1 domain. The next 7 membrane-spanning stretches (helical) occupy residues 542 to 562 (FVYI…MTVF), 575 to 595 (GVIF…NGLS), 630 to 650 (IPMS…VIGF), 662 to 682 (LLML…GGAA), 686 to 706 (IVAN…GGFI), 715 to 735 (WWIW…ISVN), and 774 to 794 (IGFG…TLAL). The ABC transporter 2 domain maps to 867–1119 (LTFDNIKYSV…ELIKYFEGIK (253 aa)). Residue 912 to 919 (GVSGAGKT) coordinates ATP. An ABC transmembrane type-2 2 domain is found at 1192–1406 (NQCLACLWKM…TLYGLVASQF (215 aa)). 7 helical membrane-spanning segments follow: residues 1213 to 1233 (AIRL…FWDL), 1243 to 1263 (LFNA…LNSQ), 1299 to 1319 (FPYT…MIGF), 1326 to 1346 (FFWY…YGMM), 1356 to 1376 (VASI…GFII), 1387 to 1407 (WYCW…SQFG), and 1436 to 1456 (VVAV…GFAI).

Belongs to the ABC transporter superfamily. ABCG family. PDR (TC 3.A.1.205) subfamily.

Its subcellular location is the membrane. May be a general defense protein. The protein is ABC transporter G family member 35 of Oryza sativa subsp. japonica (Rice).